Here is a 544-residue protein sequence, read N- to C-terminus: Apolipoprotein N-acyltransferase 1 (544 aa).

A run of 6 helical transmembrane segments spans residues 30 to 50, 57 to 79, 91 to 111, 115 to 135, 157 to 177, and 197 to 217; these read LNLN…FLLL, FSFL…WIIF, KYCI…SYFS, FIFQ…GFLG, IFGV…SASF, and PMMI…FTKI. Positions 225-501 constitute a CN hydrolase domain; it reads ARIALVQPNR…KDILVADVTV (277 aa). Glu-272 (proton acceptor) is an active-site residue. Lys-360 is an active-site residue. Cys-412 (nucleophile) is an active-site residue. Residues 514-534 form a helical membrane-spanning segment; sequence GDFFGVLCTIVLILNLCFIII.

The protein belongs to the CN hydrolase family. Apolipoprotein N-acyltransferase subfamily.

The protein resides in the cell inner membrane. The enzyme catalyses N-terminal S-1,2-diacyl-sn-glyceryl-L-cysteinyl-[lipoprotein] + a glycerophospholipid = N-acyl-S-1,2-diacyl-sn-glyceryl-L-cysteinyl-[lipoprotein] + a 2-acyl-sn-glycero-3-phospholipid + H(+). It participates in protein modification; lipoprotein biosynthesis (N-acyl transfer). In terms of biological role, catalyzes the phospholipid dependent N-acylation of the N-terminal cysteine of apolipoprotein, the last step in lipoprotein maturation. The chain is Apolipoprotein N-acyltransferase 1 from Treponema denticola (strain ATCC 35405 / DSM 14222 / CIP 103919 / JCM 8153 / KCTC 15104).